A 388-amino-acid chain; its full sequence is Nuclear hormone receptor family member nhr-16 (388 aa).

The segment at residues 11–86 (FLKCAICQES…VGMNPAGVQQ (76 aa)) is a DNA-binding region (nuclear receptor). 2 NR C4-type zinc fingers span residues 14–34 (CAICQESAEGFHFGAEACRAC) and 50–74 (CQGNNDCDVTINIRCMCRACRYIKC). Residues 115–387 (PPSSLMLHIP…DEFYNLMSGR (273 aa)) enclose the NR LBD domain.

It belongs to the nuclear hormone receptor family.

It is found in the nucleus. Orphan nuclear receptor. The chain is Nuclear hormone receptor family member nhr-16 (nhr-16) from Caenorhabditis elegans.